The primary structure comprises 1085 residues: RecBCD enzyme subunit RecC (1085 aa).

It belongs to the RecC family. In terms of assembly, heterotrimer of RecB, RecC and RecD. All subunits contribute to DNA-binding.

A helicase/nuclease that prepares dsDNA breaks (DSB) for recombinational DNA repair. Binds to DSBs and unwinds DNA via a highly rapid and processive ATP-dependent bidirectional helicase activity. Holoenzyme degrades any linearized DNA that is unable to undergo homologous recombination. In the holoenzyme this subunit recognizes the wild-type Chi sequence, and when added to isolated RecB increases its ATP-dependent helicase processivity. Unlike the case in E.coli, suppresses RecA-dependent homologous recombination, is instead required for single-strand annealing pathway repair of DSB. The sequence is that of RecBCD enzyme subunit RecC from Mycolicibacterium smegmatis (strain ATCC 700084 / mc(2)155) (Mycobacterium smegmatis).